Here is a 65-residue protein sequence, read N- to C-terminus: Large ribosomal subunit protein bL35 (65 aa).

The span at 1 to 16 (MPKQKTHRASAKRFKR) shows a compositional bias: basic residues. The disordered stretch occupies residues 1-20 (MPKQKTHRASAKRFKRTGSG).

This sequence belongs to the bacterial ribosomal protein bL35 family.

The chain is Large ribosomal subunit protein bL35 from Streptococcus pyogenes serotype M1.